A 577-amino-acid chain; its full sequence is 2-succinyl-5-enolpyruvyl-6-hydroxy-3-cyclohexene-1-carboxylate synthase (577 aa).

Belongs to the TPP enzyme family. MenD subfamily. Homodimer. Mg(2+) is required as a cofactor. Requires Mn(2+) as cofactor. Thiamine diphosphate serves as cofactor.

It carries out the reaction isochorismate + 2-oxoglutarate + H(+) = 5-enolpyruvoyl-6-hydroxy-2-succinyl-cyclohex-3-ene-1-carboxylate + CO2. It participates in quinol/quinone metabolism; 1,4-dihydroxy-2-naphthoate biosynthesis; 1,4-dihydroxy-2-naphthoate from chorismate: step 2/7. The protein operates within quinol/quinone metabolism; menaquinone biosynthesis. Its function is as follows. Catalyzes the thiamine diphosphate-dependent decarboxylation of 2-oxoglutarate and the subsequent addition of the resulting succinic semialdehyde-thiamine pyrophosphate anion to isochorismate to yield 2-succinyl-5-enolpyruvyl-6-hydroxy-3-cyclohexene-1-carboxylate (SEPHCHC). The protein is 2-succinyl-5-enolpyruvyl-6-hydroxy-3-cyclohexene-1-carboxylate synthase of Christiangramia forsetii (strain DSM 17595 / CGMCC 1.15422 / KT0803) (Gramella forsetii).